We begin with the raw amino-acid sequence, 1170 residues long: DNA-directed RNA polymerase subunit beta' (1170 aa).

Zn(2+) is bound by residues Cys-60, Cys-62, Cys-75, and Cys-78. Residues Asp-449, Asp-451, and Asp-453 each contribute to the Mg(2+) site. 4 residues coordinate Zn(2+): Cys-774, Cys-848, Cys-855, and Cys-858. The interval 1145–1170 (EPGEENGEPGGERLYGMDELYGETAN) is disordered.

It belongs to the RNA polymerase beta' chain family. As to quaternary structure, the RNAP catalytic core consists of 2 alpha, 1 beta, 1 beta' and 1 omega subunit. When a sigma factor is associated with the core the holoenzyme is formed, which can initiate transcription. It depends on Mg(2+) as a cofactor. Requires Zn(2+) as cofactor.

It carries out the reaction RNA(n) + a ribonucleoside 5'-triphosphate = RNA(n+1) + diphosphate. DNA-dependent RNA polymerase catalyzes the transcription of DNA into RNA using the four ribonucleoside triphosphates as substrates. This is DNA-directed RNA polymerase subunit beta' from Pelotomaculum thermopropionicum (strain DSM 13744 / JCM 10971 / SI).